Here is a 346-residue protein sequence, read N- to C-terminus: Queuosine 5'-phosphate N-glycosylase/hydrolase (346 aa).

Queuine-binding residues include His-49, Phe-243, Asp-245, Asp-310, and Asp-315. Asp-245 (nucleophile or transition state stabilizer) is an active-site residue.

This sequence belongs to the QNG1 protein family.

The catalysed reaction is queuosine 5'-phosphate + H2O = queuine + D-ribose 5-phosphate. Functionally, catalyzes the hydrolysis of queuosine 5'-phosphate, releasing the nucleobase queuine (q). Is required for salvage of queuine from exogenous queuosine (Q) that is imported and then converted to queuosine 5'-phosphate intracellularly. The polypeptide is Queuosine 5'-phosphate N-glycosylase/hydrolase (Schizosaccharomyces pombe (strain 972 / ATCC 24843) (Fission yeast)).